The chain runs to 290 residues: MDKLIKTISVSGAFRAYVLDCTETVRAAQERHHTLSSSTVALGRTLIANQILAANQKGDSKVTVKVIGDSSFGHIISVADTKGHVKGYIQNPGVDIKKTATGEVLVGPFMGQGHFVTITDYGTGNPYTSTTPLITGEIGEDLAYYLTESEQTPSAVGLNVLLDQEDKVKVAGGFMLQVLPEASDEEISRYEKRIQEMPAISSLLASENHIDALLAAIYGKEPYKRLAEEQLSFQCDCSRERFASALMSLPKADLLTMLNEDKGAEIVCQFCGTKYQFDQADLEVLINDKT.

Intrachain disulfides connect Cys235-Cys237 and Cys268-Cys271.

It belongs to the HSP33 family. Post-translationally, under oxidizing conditions two disulfide bonds are formed involving the reactive cysteines. Under reducing conditions zinc is bound to the reactive cysteines and the protein is inactive.

The protein localises to the cytoplasm. In terms of biological role, redox regulated molecular chaperone. Protects both thermally unfolding and oxidatively damaged proteins from irreversible aggregation. Plays an important role in the bacterial defense system toward oxidative stress. The sequence is that of 33 kDa chaperonin from Streptococcus equi subsp. zooepidemicus (strain MGCS10565).